The sequence spans 151 residues: Lectin-like protein BA14k (151 aa).

An N-terminal signal peptide occupies residues 1 to 26; it reads MNIFKQTCVGAFAVIFGATSIAPTMA. The chain crosses the membrane as a helical span at residues 83–103; sequence GWWYPLAAFGAGAIIGGAVSQ.

The protein belongs to the BA14k family.

It localises to the cell membrane. Its function is as follows. Has immunoglobulin-binding and hemagglutination properties, and can bind to mannose. Essential for virulence. May be involved in LPS biosynthesis or polysaccharide transport. This Brucella anthropi (strain ATCC 49188 / DSM 6882 / CCUG 24695 / JCM 21032 / LMG 3331 / NBRC 15819 / NCTC 12168 / Alc 37) (Ochrobactrum anthropi) protein is Lectin-like protein BA14k.